A 158-amino-acid polypeptide reads, in one-letter code: Phosphopantetheine adenylyltransferase (158 aa).

Threonine 10 is a binding site for substrate. ATP contacts are provided by residues 10-11 (TF) and histidine 18. Substrate contacts are provided by lysine 42, leucine 74, and arginine 88. ATP contacts are provided by residues 89–91 (GLR), glutamate 99, and 124–130 (NSFISST).

It belongs to the bacterial CoaD family. Homohexamer. The cofactor is Mg(2+).

It localises to the cytoplasm. The catalysed reaction is (R)-4'-phosphopantetheine + ATP + H(+) = 3'-dephospho-CoA + diphosphate. The protein operates within cofactor biosynthesis; coenzyme A biosynthesis; CoA from (R)-pantothenate: step 4/5. In terms of biological role, reversibly transfers an adenylyl group from ATP to 4'-phosphopantetheine, yielding dephospho-CoA (dPCoA) and pyrophosphate. This is Phosphopantetheine adenylyltransferase from Shewanella woodyi (strain ATCC 51908 / MS32).